A 468-amino-acid chain; its full sequence is Anthocyanidin 3-O-glucoside 2'''-O-xylosyltransferase (468 aa).

Residues S284, 344 to 346 (IQQ), 361 to 369 (HCGFGSMWE), and 383 to 386 (HGEQ) contribute to the UDP-alpha-D-xylose site.

Belongs to the UDP-glycosyltransferase family.

It catalyses the reaction an anthocyanidin 3-O-beta-D-glucoside + UDP-alpha-D-xylose = an anthocyanidin 3-O-beta-D-sambubioside + UDP + 2 H(+). It participates in secondary metabolite biosynthesis; flavonoid biosynthesis. Functionally, contributes to the last few anthocyanin biosynthetic steps. Converts cyanidin 3-O-glucoside to cyanidin 3-O-xylosyl(1-&gt;2)glucoside. Can use 3-O-glucosylated anthocyanidins/flavonols and uridine diphosphate (UDP)-xylose as substrates. The polypeptide is Anthocyanidin 3-O-glucoside 2'''-O-xylosyltransferase (A3G2XYLT) (Arabidopsis thaliana (Mouse-ear cress)).